The sequence spans 427 residues: Ribosome biogenesis protein WDR12 homolog (427 aa).

The segment at 13–97 (LQLHLYTKQK…EDTVELEYVE (85 aa)) is ubiquitin-like (UBL) domain. WD repeat units lie at residues 109–146 (LHDDWVSAVEAKDNWILTGCYDNTLNIWTTKGKHKLTI), 148–190 (GHIA…NSVE), 197–236 (GHERGVDCIAANRSKTRMATGSWDTMLKIWSTDVRNDGDS), 260–298 (GHRECISGVQWIDDNTLVTSSWDHTIKIWDLALSGIKSE), 301–339 (GHKSFFDLSYSHLNGLIIAASPDKNLRLYDPKSNQGTIV), 345–385 (GHTQ…APIF), and 389–427 (GHEDKVLACDWSNPKFILSGGSDNSVRVFKSKIAIGEQK).

This sequence belongs to the WD repeat WDR12/YTM1 family.

The protein localises to the nucleus. It localises to the nucleolus. It is found in the nucleoplasm. Functionally, required for maturation of ribosomal RNAs and formation of the large ribosomal subunit. The protein is Ribosome biogenesis protein WDR12 homolog of Aedes aegypti (Yellowfever mosquito).